We begin with the raw amino-acid sequence, 390 residues long: Ribonucleoside-diphosphate reductase subunit M2 (390 aa).

The residue at position 20 (S20) is a Phosphoserine. A Phosphothreonine modification is found at T33. Residues 49–51 carry the Cy motif; sequence RRI. Fe cation-binding residues include D139, E170, and H173. Residue Y177 is part of the active site. Fe cation is bound by residues E233, E267, and H270.

The protein belongs to the ribonucleoside diphosphate reductase small chain family. As to quaternary structure, heterodimer of a large and a small subunit. Interacts (via Cy motif and when phosphorylated at Thr-33) with CCNF; the interaction occurs exclusively in G2 and early M. Requires Fe cation as cofactor. Post-translationally, phosphorylation on Ser-20 relieves the inhibitory effect on Wnt signaling. Phosphorylated on Thr-33 by CDK1 and CDK2; predominantly in G2 and M phase. In terms of processing, ubiquitinated by the SCF(CCNF) E3 ubiquitin-protein ligase complex; leading to its degradation by the proteasome.

Its subcellular location is the cytoplasm. It is found in the nucleus. The catalysed reaction is a 2'-deoxyribonucleoside 5'-diphosphate + [thioredoxin]-disulfide + H2O = a ribonucleoside 5'-diphosphate + [thioredoxin]-dithiol. Its function is as follows. Provides the precursors necessary for DNA synthesis. Catalyzes the biosynthesis of deoxyribonucleotides from the corresponding ribonucleotides. Inhibits Wnt signaling. In Rattus norvegicus (Rat), this protein is Ribonucleoside-diphosphate reductase subunit M2 (Rrm2).